Here is a 493-residue protein sequence, read N- to C-terminus: Dipeptide permease D (493 aa).

13 helical membrane-spanning segments follow: residues V14–L34, A49–A69, L91–V111, G138–C158, W167–C187, N212–W232, W235–Y255, L267–G287, M312–I332, I344–L364, L379–M399, V413–I433, and V458–L478.

It belongs to the major facilitator superfamily. Proton-dependent oligopeptide transporter (POT/PTR) (TC 2.A.17) family. DtpD subfamily.

The protein localises to the cell inner membrane. In terms of biological role, probable proton-dependent permease that transports dipeptides. The sequence is that of Dipeptide permease D from Citrobacter rodentium (strain ICC168) (Citrobacter freundii biotype 4280).